We begin with the raw amino-acid sequence, 208 residues long: N-(5'-phosphoribosyl)anthranilate isomerase (208 aa).

The protein belongs to the TrpF family.

The enzyme catalyses N-(5-phospho-beta-D-ribosyl)anthranilate = 1-(2-carboxyphenylamino)-1-deoxy-D-ribulose 5-phosphate. The protein operates within amino-acid biosynthesis; L-tryptophan biosynthesis; L-tryptophan from chorismate: step 3/5. In Neisseria meningitidis serogroup B (strain ATCC BAA-335 / MC58), this protein is N-(5'-phosphoribosyl)anthranilate isomerase.